We begin with the raw amino-acid sequence, 246 residues long: Chanoclavine-I dehydrogenase easD (246 aa).

Positions 1-20 are cleaved as a signal peptide; that stretch reads MASVSSKIFAITGGASGIGA. Positions 18, 66, 132, 169, and 173 each coordinate NADP(+). Tyr-169 serves as the catalytic Proton donor. Lys-173 serves as the catalytic Lowers pKa of active site Tyr.

It belongs to the short-chain dehydrogenases/reductases (SDR) family. Homotetramer.

It catalyses the reaction chanoclavine-I + NAD(+) = chanoclavine-I aldehyde + NADH + H(+). Its pathway is alkaloid biosynthesis; ergot alkaloid biosynthesis. In terms of biological role, chanoclavine-I dehydrogenase; part of the gene cluster that mediates the biosynthesis of fungal ergot alkaloid. DmaW catalyzes the first step of ergot alkaloid biosynthesis by condensing dimethylallyl diphosphate (DMAP) and tryptophan to form 4-dimethylallyl-L-tryptophan. The second step is catalyzed by the methyltransferase easF that methylates 4-dimethylallyl-L-tryptophan in the presence of S-adenosyl-L-methionine, resulting in the formation of 4-dimethylallyl-L-abrine. The catalase easC and the FAD-dependent oxidoreductase easE then transform 4-dimethylallyl-L-abrine to chanoclavine-I which is further oxidized by easD in the presence of NAD(+), resulting in the formation of chanoclavine-I aldehyde. Chanoclavine-I aldehyde is the precursor of ergoamides and ergopeptines in Clavicipitaceae, and clavine-type alcaloids such as fumiclavine in Trichocomaceae. However, the metabolites downstream of chanoclavine-I aldehyde in Arthrodermataceae have not been identified yet. The chain is Chanoclavine-I dehydrogenase easD from Arthroderma benhamiae (strain ATCC MYA-4681 / CBS 112371) (Trichophyton mentagrophytes).